A 317-amino-acid chain; its full sequence is Ribosomal protein L11 methyltransferase (317 aa).

S-adenosyl-L-methionine contacts are provided by Thr-158, Gly-179, Asp-201, and Asn-244.

The protein belongs to the methyltransferase superfamily. PrmA family.

Its subcellular location is the cytoplasm. The enzyme catalyses L-lysyl-[protein] + 3 S-adenosyl-L-methionine = N(6),N(6),N(6)-trimethyl-L-lysyl-[protein] + 3 S-adenosyl-L-homocysteine + 3 H(+). In terms of biological role, methylates ribosomal protein L11. In Streptococcus uberis (strain ATCC BAA-854 / 0140J), this protein is Ribosomal protein L11 methyltransferase.